A 285-amino-acid polypeptide reads, in one-letter code: 4-diphosphocytidyl-2-C-methyl-D-erythritol kinase (285 aa).

Residue Lys-10 is part of the active site. An ATP-binding site is contributed by 92–102 (PFGAGLGGGSS). The active site involves Asp-134.

The protein belongs to the GHMP kinase family. IspE subfamily.

It carries out the reaction 4-CDP-2-C-methyl-D-erythritol + ATP = 4-CDP-2-C-methyl-D-erythritol 2-phosphate + ADP + H(+). It participates in isoprenoid biosynthesis; isopentenyl diphosphate biosynthesis via DXP pathway; isopentenyl diphosphate from 1-deoxy-D-xylulose 5-phosphate: step 3/6. Catalyzes the phosphorylation of the position 2 hydroxy group of 4-diphosphocytidyl-2C-methyl-D-erythritol. The protein is 4-diphosphocytidyl-2-C-methyl-D-erythritol kinase of Chloroherpeton thalassium (strain ATCC 35110 / GB-78).